The following is a 178-amino-acid chain: Large ribosomal subunit protein eL20 (178 aa).

Belongs to the eukaryotic ribosomal protein eL20 family.

This Castanea sativa (Sweet chestnut) protein is Large ribosomal subunit protein eL20 (RPL18A).